We begin with the raw amino-acid sequence, 876 residues long: DNA polymerase I (876 aa).

The 310-residue stretch at 1 to 310 (MKNKLVLIDG…FAIADSVTDE (310 aa)) folds into the 5'-3' exonuclease domain. A subtilisin large fragment region spans residues 289 to 876 (TDEGEKPLAG…HYGPTWYDAK (588 aa)). The segment at 469 to 876 (EQDRLLTELE…HYGPTWYDAK (408 aa)) is polymerase.

The protein belongs to the DNA polymerase type-A family. As to quaternary structure, single-chain monomer with multiple functions.

It carries out the reaction DNA(n) + a 2'-deoxyribonucleoside 5'-triphosphate = DNA(n+1) + diphosphate. Functionally, in addition to polymerase activity, the recombinant enzyme has strand displacement and 5'-3' exonuclease activity, but lacks proofreading 3'-5' exonuclease activity. The protein is DNA polymerase I (polA) of Geobacillus stearothermophilus (Bacillus stearothermophilus).